A 493-amino-acid polypeptide reads, in one-letter code: Glycylpeptide N-tetradecanoyltransferase (493 aa).

The interval 1–30 (MSDSKDSKGKAPQKPNDAEQTPGGKLTPQA) is disordered. Residues 82 to 85 (FKFW), 216 to 218 (LCI), and 224 to 228 (SKRLA) each bind tetradecanoyl-CoA. Leucine 493 (proton acceptor; via carboxylate) is an active-site residue.

It belongs to the NMT family. In terms of assembly, monomer.

It is found in the cytoplasm. It catalyses the reaction N-terminal glycyl-[protein] + tetradecanoyl-CoA = N-tetradecanoylglycyl-[protein] + CoA + H(+). Its function is as follows. Adds a myristoyl group to the N-terminal glycine residue of certain cellular proteins. This Emericella nidulans (strain FGSC A4 / ATCC 38163 / CBS 112.46 / NRRL 194 / M139) (Aspergillus nidulans) protein is Glycylpeptide N-tetradecanoyltransferase (swoF).